A 377-amino-acid chain; its full sequence is Carbamoyl phosphate synthase small chain (377 aa).

The CPSase stretch occupies residues 1–186 (MSTPALLVLA…LGKGFVTPDE (186 aa)). Residues serine 47, glycine 238, and glycine 240 each contribute to the L-glutamine site. The Glutamine amidotransferase type-1 domain occupies 190-377 (HVVAYDFGVK…IGNMKAAKRA (188 aa)). The active-site Nucleophile is cysteine 266. Leucine 267, glutamine 270, asparagine 308, glycine 310, and phenylalanine 311 together coordinate L-glutamine. Residues histidine 350 and glutamate 352 contribute to the active site.

Belongs to the CarA family. In terms of assembly, composed of two chains; the small (or glutamine) chain promotes the hydrolysis of glutamine to ammonia, which is used by the large (or ammonia) chain to synthesize carbamoyl phosphate. Tetramer of heterodimers (alpha,beta)4.

The catalysed reaction is hydrogencarbonate + L-glutamine + 2 ATP + H2O = carbamoyl phosphate + L-glutamate + 2 ADP + phosphate + 2 H(+). It carries out the reaction L-glutamine + H2O = L-glutamate + NH4(+). It participates in amino-acid biosynthesis; L-arginine biosynthesis; carbamoyl phosphate from bicarbonate: step 1/1. It functions in the pathway pyrimidine metabolism; UMP biosynthesis via de novo pathway; (S)-dihydroorotate from bicarbonate: step 1/3. In terms of biological role, small subunit of the glutamine-dependent carbamoyl phosphate synthetase (CPSase). CPSase catalyzes the formation of carbamoyl phosphate from the ammonia moiety of glutamine, carbonate, and phosphate donated by ATP, constituting the first step of 2 biosynthetic pathways, one leading to arginine and/or urea and the other to pyrimidine nucleotides. The small subunit (glutamine amidotransferase) binds and cleaves glutamine to supply the large subunit with the substrate ammonia. This chain is Carbamoyl phosphate synthase small chain, found in Neisseria meningitidis serogroup B (strain ATCC BAA-335 / MC58).